The primary structure comprises 1315 residues: Activating molecule in BECN1-regulated autophagy protein 1A (1315 aa).

3 WD repeats span residues 50-89 (DSPR…CVHS), 92-132 (GHRR…ESWL), and 134-174 (ESNS…TVVK). 10 disordered regions span residues 294 to 322 (RVPS…ARTE), 342 to 409 (FSSV…QRTG), 426 to 463 (FQSP…SSSI), 502 to 526 (NNNM…NPPH), 545 to 610 (SRRW…DTGQ), 630 to 660 (VYRQ…DNDY), 681 to 736 (RDSV…PRNA), 985 to 1134 (HSDG…STGQ), 1181 to 1208 (GSQT…PESL), and 1286 to 1315 (LLSS…EYGR). A compositionally biased stretch (polar residues) spans 351 to 360 (NMRNHSSSSG). The segment covering 378 to 388 (PGREGGGRHPG) has biased composition (basic and acidic residues). Polar residues-rich tracts occupy residues 394-409 (SGLN…QRTG) and 426-435 (FQSPVYTSAS). Composition is skewed to polar residues over residues 552–581 (GQPS…QSNE) and 633–647 (QSAS…QGAL). Positions 696–715 (RPLSSNPSSLSPSPVPNAES) are enriched in low complexity. Positions 716–725 (SEVDFEEFEE) are enriched in acidic residues. Positions 1009–1021 (PSSSRSGDRAGSS) are enriched in low complexity. Residues 1022–1031 (RTDRRSRRDI) are compositionally biased toward basic and acidic residues. The span at 1047–1060 (SVTSQGTQTQNQRL) shows a compositional bias: polar residues. 2 consecutive short sequence motifs (TQT motif) follow at residues 1053–1055 (TQT) and 1065–1067 (TQT). The segment covering 1061-1072 (QHAETQTDRDLP) has biased composition (basic and acidic residues). Residues 1076 to 1090 (QQPSTSQGSQVTDAT) are compositionally biased toward polar residues. A compositionally biased stretch (acidic residues) spans 1091 to 1103 (ESLDFETLPEDSG). 2 stretches are compositionally biased toward polar residues: residues 1125–1134 (SEPSTDSTGQ) and 1181–1193 (GSQT…NRTR). A compositionally biased stretch (low complexity) spans 1286–1307 (LLSSSPSLSPVNNSNYSNSDSS).

The protein belongs to the WD repeat AMBRA1 family. As to quaternary structure, component of the DCX(AMBRA1) E3 ubiquitin ligase complex.

It is found in the endoplasmic reticulum. The protein resides in the cytoplasm. Its subcellular location is the cytoskeleton. The protein localises to the cytoplasmic vesicle. It localises to the autophagosome. It is found in the mitochondrion. The protein resides in the cytosol. Its subcellular location is the nucleus. The protein localises to the cell junction. It localises to the focal adhesion. Its pathway is protein modification; protein ubiquitination. Substrate-recognition component of a DCX (DDB1-CUL4-X-box) E3 ubiquitin-protein ligase complex involved in cell cycle control and autophagy. The DCX(AMBRA1) complex specifically mediates the polyubiquitination of target proteins. Acts as an upstream master regulator of the transition from G1 to S cell phase: ambra1a specifically recognizes and binds phosphorylated cyclin-D (ccnd1, ccnd2 and ccnd3), leading to cyclin-D ubiquitination by the DCX(AMBRA1) complex and subsequent degradation. Acts as a regulator of Cul5-RING (CRL5) E3 ubiquitin-protein ligase complexes by mediating ubiquitination and degradation of Elongin-C (eloc) component of CRL5 complexes. Acts as a key regulator of autophagy by modulating the BECN1-PIK3C3 complex: controls protein turnover during neuronal development, and regulates normal cell survival and proliferation. In normal conditions, ambra1a is tethered to the cytoskeleton via interaction with dyneins light chains. Upon autophagy induction, ambra1a is released from the cytoskeletal docking site to induce autophagosome nucleation by mediating ubiquitination of proteins involved in autophagy. Also acts as an activator of mitophagy. Required for skeletal muscle development. The sequence is that of Activating molecule in BECN1-regulated autophagy protein 1A from Danio rerio (Zebrafish).